Consider the following 503-residue polypeptide: Opine oxidase subunit A (503 aa).

The protein to T-protein and to dimethylglycine dehydrogenase. Heterodimer of a subunit A and a subunit B.

It functions in the pathway opine metabolism; octopine degradation. In terms of biological role, oxidative cleavage of octopine into L-arginine and pyruvate. The chain is Opine oxidase subunit A (ooxA) from Agrobacterium tumefaciens (strain Ach5).